The primary structure comprises 513 residues: ATP synthase subunit alpha (513 aa).

169–176 provides a ligand contact to ATP; sequence GDRQIGKT.

It belongs to the ATPase alpha/beta chains family. F-type ATPases have 2 components, CF(1) - the catalytic core - and CF(0) - the membrane proton channel. CF(1) has five subunits: alpha(3), beta(3), gamma(1), delta(1), epsilon(1). CF(0) has three main subunits: a(1), b(2) and c(9-12). The alpha and beta chains form an alternating ring which encloses part of the gamma chain. CF(1) is attached to CF(0) by a central stalk formed by the gamma and epsilon chains, while a peripheral stalk is formed by the delta and b chains.

Its subcellular location is the cell inner membrane. The enzyme catalyses ATP + H2O + 4 H(+)(in) = ADP + phosphate + 5 H(+)(out). Functionally, produces ATP from ADP in the presence of a proton gradient across the membrane. The alpha chain is a regulatory subunit. The polypeptide is ATP synthase subunit alpha (Francisella philomiragia subsp. philomiragia (strain ATCC 25017 / CCUG 19701 / FSC 153 / O#319-036)).